We begin with the raw amino-acid sequence, 290 residues long: S-adenosylmethionine-dependent nucleotide dehydratase (290 aa).

The 221-residue stretch at 6 to 226 (SGNNIIPSVN…VNRHSKNKFL (221 aa)) folds into the Radical SAM core domain. Positions 22, 26, and 29 each coordinate [4Fe-4S] cluster.

Belongs to the radical SAM superfamily. Viperin family. The cofactor is [4Fe-4S] cluster.

It catalyses the reaction UTP + AH2 + S-adenosyl-L-methionine = 3'-deoxy-3',4'-didehydro-UTP + 5'-deoxyadenosine + L-methionine + A + H2O + H(+). Functionally, expression of pVip47 in E.coli (strain MG1655) confers resistance to phage P1; has no effect against T7. Catalyzes the conversion of uridine triphosphate (UTP) to 3'-deoxy-3',4'-didehydro-UTP (ddhUTP), probably via a SAM-dependent radical mechanism. The modified nucleotide represses transcription from T7 RNA polymerase-directed genes (possibly by acting as chain terminators), strongly suggesting these nucleotides block viral polymerase transcription. How this protein allows bacteria to resist viruses that do not encode their own RNA polymerase (such as lambda, P1) is unknown. The sequence is that of S-adenosylmethionine-dependent nucleotide dehydratase from Flammeovirga pacifica.